The following is a 275-amino-acid chain: NH(3)-dependent NAD(+) synthetase (275 aa).

Gly50 to Ser57 serves as a coordination point for ATP. Asp56 is a binding site for Mg(2+). Arg147 provides a ligand contact to deamido-NAD(+). Thr167 contacts ATP. Mg(2+) is bound at residue Glu172. Deamido-NAD(+) is bound by residues Lys180 and Asp187. ATP contacts are provided by Lys196 and Thr218. Position 267–268 (His267–Lys268) interacts with deamido-NAD(+).

It belongs to the NAD synthetase family. In terms of assembly, homodimer.

The catalysed reaction is deamido-NAD(+) + NH4(+) + ATP = AMP + diphosphate + NAD(+) + H(+). It participates in cofactor biosynthesis; NAD(+) biosynthesis; NAD(+) from deamido-NAD(+) (ammonia route): step 1/1. Functionally, catalyzes the ATP-dependent amidation of deamido-NAD to form NAD. Uses ammonia as a nitrogen source. The chain is NH(3)-dependent NAD(+) synthetase from Pseudomonas aeruginosa (strain LESB58).